A 337-amino-acid polypeptide reads, in one-letter code: Undecaprenyl-phosphate 4-deoxy-4-formamido-L-arabinose transferase (337 aa).

A run of 2 helical transmembrane segments spans residues 235 to 255 (LSIIGFSMALLGVLFAALLIV) and 270 to 290 (FVLFAVLFVFTGGQFIGMGLL).

The protein belongs to the glycosyltransferase 2 family.

It localises to the cell inner membrane. The enzyme catalyses UDP-4-deoxy-4-formamido-beta-L-arabinose + di-trans,octa-cis-undecaprenyl phosphate = 4-deoxy-4-formamido-alpha-L-arabinopyranosyl di-trans,octa-cis-undecaprenyl phosphate + UDP. The protein operates within glycolipid biosynthesis; 4-amino-4-deoxy-alpha-L-arabinose undecaprenyl phosphate biosynthesis; 4-amino-4-deoxy-alpha-L-arabinose undecaprenyl phosphate from UDP-4-deoxy-4-formamido-beta-L-arabinose and undecaprenyl phosphate: step 1/2. It functions in the pathway bacterial outer membrane biogenesis; lipopolysaccharide biosynthesis. Catalyzes the transfer of 4-deoxy-4-formamido-L-arabinose from UDP to undecaprenyl phosphate. The modified arabinose is attached to lipid A and is required for resistance to polymyxin and cationic antimicrobial peptides. The sequence is that of Undecaprenyl-phosphate 4-deoxy-4-formamido-L-arabinose transferase from Pseudomonas syringae pv. syringae (strain B728a).